A 926-amino-acid chain; its full sequence is MNRRDFIKSAAASAACASAGIAIPANLSAASEAEKGWRWDKAACRFCGTGCGIMVATKEGKIVAVKGDPEAPVNRGLNCIKGYFNAKIMYGEDRITHPLLRVNEKGEFDKKGKFKQVSWKQAFDVMEAQFRKTYDELGPHGVGVLGSGQYTIPEGYTAAKMMKAGFRSNSIDPNARHCMASAVVGFIQVFGIDEPSGCFDDIELTDTIVAWGANMAEMHPILWARVSDRKLSNPDRVKVVNLSTYSTRTSNLADIEIIFAPSADLAIWNYIAREIVYNHPEMIDEEFVKKHCIFTTGPADIGYGLRPDIKYKKYLSSELDTAATEKSKVLSEAEGVTLSYLGLKAGDTMENKNTATAGNHWHISFEEFKKALAPYTLEFTAKVAKGDPNEDIEEFKGKLKALADLYIEKNRKVVSFWTMGFNQHQRGTWVNEQAYMVHFLLGKQALPGSGAFSLTGQPSACGTAREVGTFVHRLPADMVVNNPKHREISEKIWKLPAGTLNGIPGSHYVKMMRDLEDGKVKFIWVQVNNPWQNTANANHWIKAAREMDNFIVVSDPYPGISAKVADLILPTAMIYEKWGAYGNAERRTQHWRQQVLPVGEAMPDIWQMLEFSKRFKLKDVWGEKKLNDKVTLPSVLDAAKAMGYSEEDTLFDVLFANEEAKSYPANDPIMENFDNTEVFGDKRGVIGSDGKEFKGYGFFVHKYLWEEYRKFGLGHGHDLADFDTYHRVRGLRWPVVDGKETQWRFNTKFDPYAKKAAPNDKFAFYGNKAAALPSGDLKGVTDKEKTPLTNKAKIFFRPYMDPCEMPSSEYPFWLCTGRVLEHWHSGTMTMRVPELYRAVPEALCYMHEQDAAKLGVLQNEIVWIESRRGKVKARVDLKGRNKPPVGLVYVPWFDENVFINKVTLDSTCPISKETDYKKCAVKIYKA.

A signal peptide (tat-type signal) is located at residues methionine 1 to alanine 30. In terms of domain architecture, 4Fe-4S Mo/W bis-MGD-type spans tryptophan 37 to aspartate 93. Residues cysteine 44, cysteine 47, cysteine 51, and cysteine 79 each contribute to the [4Fe-4S] cluster site. Residues lysine 81, glutamine 149, asparagine 174, cysteine 178, tryptophan 211 to methionine 218, methionine 419, glutamine 423, asparagine 529, serine 554 to aspartate 555, lysine 577, aspartate 604, and threonine 816 to serine 825 each bind Mo-bis(molybdopterin guanine dinucleotide). Tryptophan 892 lines the substrate pocket. The Mo-bis(molybdopterin guanine dinucleotide) site is built by asparagine 900 and lysine 917.

Belongs to the prokaryotic molybdopterin-containing oxidoreductase family. NasA/NapA/NarB subfamily. As to quaternary structure, component of the periplasmic nitrate reductase NapAB complex composed of NapA and NapB. The cofactor is [4Fe-4S] cluster. Requires Mo-bis(molybdopterin guanine dinucleotide) as cofactor. Predicted to be exported by the Tat system. The position of the signal peptide cleavage has not been experimentally proven.

It is found in the periplasm. The catalysed reaction is 2 Fe(II)-[cytochrome] + nitrate + 2 H(+) = 2 Fe(III)-[cytochrome] + nitrite + H2O. Functionally, catalytic subunit of the periplasmic nitrate reductase complex NapAB. Receives electrons from NapB and catalyzes the reduction of nitrate to nitrite. This Campylobacter curvus (strain 525.92) protein is Periplasmic nitrate reductase.